A 297-amino-acid chain; its full sequence is Homoserine kinase (297 aa).

Residue 82-92 (PLTRGLGSSAS) participates in ATP binding.

This sequence belongs to the GHMP kinase family. Homoserine kinase subfamily.

It localises to the cytoplasm. It carries out the reaction L-homoserine + ATP = O-phospho-L-homoserine + ADP + H(+). It functions in the pathway amino-acid biosynthesis; L-threonine biosynthesis; L-threonine from L-aspartate: step 4/5. Its function is as follows. Catalyzes the ATP-dependent phosphorylation of L-homoserine to L-homoserine phosphate. The polypeptide is Homoserine kinase (Bacillus cereus (strain ATCC 10987 / NRS 248)).